Reading from the N-terminus, the 131-residue chain is Holo-[acyl-carrier-protein] synthase (131 aa).

2 residues coordinate Mg(2+): aspartate 8 and glutamate 59.

This sequence belongs to the P-Pant transferase superfamily. AcpS family. The cofactor is Mg(2+).

The protein localises to the cytoplasm. It catalyses the reaction apo-[ACP] + CoA = holo-[ACP] + adenosine 3',5'-bisphosphate + H(+). In terms of biological role, transfers the 4'-phosphopantetheine moiety from coenzyme A to a Ser of acyl-carrier-protein. In Orientia tsutsugamushi (strain Boryong) (Rickettsia tsutsugamushi), this protein is Holo-[acyl-carrier-protein] synthase.